An 84-amino-acid chain; its full sequence is Large ribosomal subunit protein bL27 (84 aa).

A disordered region spans residues Met-1–Gly-22. Over residues Ala-7–Gln-19 the composition is skewed to polar residues.

This sequence belongs to the bacterial ribosomal protein bL27 family.

This is Large ribosomal subunit protein bL27 from Streptomyces avermitilis (strain ATCC 31267 / DSM 46492 / JCM 5070 / NBRC 14893 / NCIMB 12804 / NRRL 8165 / MA-4680).